The sequence spans 309 residues: MPKLSVIVPTFNRQVLLEKAIKSIQNQDFKDLEIIVSDDNSSDDTKSVVQNLQKDDDRIKYFLNQNYKQGPNGNKNNGLDQASGEFVTFLDDDDELLSGALSTLMQKANEGYAHVFGNCLIEKEGNLSKEFSGKGLEKDSEISKKDFLMAKFSGEFFSVFKKSLLENKRFNEEFYGNEATLWVNLYKEKSFYIHKAFRIYRIFRQDSVTLGASKNAYRVYLGYLELAKILENELRMSKDKDYKKTCASYYKMAAYYAKLAKNYKALYKCLFKSLSIKINAPALILLILSIIPNNMIEKLSKIRVALCKN.

The chain crosses the membrane as a helical span at residues 273–291; it reads SLSIKINAPALILLILSII.

This sequence belongs to the glycosyltransferase 2 family.

Its subcellular location is the membrane. It catalyses the reaction [alpha-D-GalNAc-(1-&gt;4)]4-alpha-D-GalNAc-(1-&gt;3)-alpha-D-diNAcBac-tri-trans,hepta-cis-undecaprenyl diphosphate + UDP-alpha-D-glucose = [alpha-D-GalNAc-(1-&gt;4)]2-[beta-D-Glc-(1-&gt;3)]-[alpha-D-GalNAc-(1-&gt;4)]2-alpha-D-GalNAc-(1-&gt;3)-alpha-D-diNAcBac-tri-trans,hepta-cis-undecaprenyl diphosphate + UDP + H(+). It functions in the pathway protein modification; protein glycosylation. In terms of biological role, glucosyltransferase that adds he final branching glucose to complete the final heptasaccharide structure in the N-linked protein glycosylation pathway. The polypeptide is GalNAc(5)-diNAcBac-PP-undecaprenol beta-1,3-glucosyltransferase (pglI) (Campylobacter jejuni subsp. jejuni serotype O:2 (strain ATCC 700819 / NCTC 11168)).